We begin with the raw amino-acid sequence, 2155 residues long: Polyketide synthase 2 (2155 aa).

An N-terminal acylcarrier protein transacylase domain (SAT) region spans residues 7–244; that stretch reads FIFGDQTGGF…IPIPIWAPYH (238 aa). Positions 374 to 807 constitute a Ketosynthase family 3 (KS3) domain; that stretch reads DSKIAIIGMS…GGNSALLLED (434 aa). Catalysis depends on for beta-ketoacyl synthase activity residues Cys546, His681, and His723. The tract at residues 908 to 1213 is malonyl-CoA:ACP transacylase (MAT) domain; the sequence is GFVFSGQGAQ…ASLHRKDDGW (306 aa). Ser998 (for acyl/malonyl transferase activity) is an active-site residue. Residues 1290–1605 form a product template (PT) domain region; it reads TSSVQRIIRQ…RSLLNKVLPP (316 aa). Positions 1294-1428 are N-terminal hotdog fold; the sequence is QRIIRQTDGP…CLLRFADPTS (135 aa). One can recognise a PKS/mFAS DH domain in the interval 1294-1600; that stretch reads QRIIRQTDGP…FLGMSRSLLN (307 aa). The Proton acceptor; for dehydratase activity role is filled by His1327. The C-terminal hotdog fold stretch occupies residues 1455-1600; sequence TDSLLSKGIV…FLGMSRSLLN (146 aa). The Proton donor; for dehydratase activity role is filled by Asp1514. Residues 1626–1654 are disordered; it reads AASAKDTERRPLDIPTRAQRQPSSPQTGT. Positions 1643-1654 are enriched in polar residues; that stretch reads AQRQPSSPQTGT. Residues 1649–1726 form the Carrier 1 domain; it reads SPQTGTMGRI…ELKAFLGADQ (78 aa). O-(pantetheine 4'-phosphoryl)serine is present on Ser1686. The disordered stretch occupies residues 1735 to 1765; it reads SSIGQHTPQTSDKGSGTLASQKTDGDTGPDT. Positions 1736–1756 are enriched in polar residues; that stretch reads SIGQHTPQTSDKGSGTLASQK. The 75-residue stretch at 1764 to 1838 folds into the Carrier 2 domain; the sequence is DTTLNRVCAI…ALQKALCGSE (75 aa). At Ser1798 the chain carries O-(pantetheine 4'-phosphoryl)serine. Residues 1873–2149 form a thioesterase (TE) domain region; the sequence is ASPPHATSIL…MVEMGNLIGD (277 aa). Catalysis depends on Ser1979, which acts as the For thioesterase activity.

Functionally, polyketide synthase; part of the Pks2 gene cluster that mediates the formation of infectious structures (appressoria), enabling these fungi to kill insects faster. The product of the Pks2 gene cluster is different from the one of Pks1 and has still not been identified. In Metarhizium anisopliae (strain ARSEF 549), this protein is Polyketide synthase 2.